We begin with the raw amino-acid sequence, 53 residues long: MLHYAVVFFVIAIIAAVLGFGGIAAGAAGIAKILFFVFLVLALLSILGGVFRK.

2 helical membrane-spanning segments follow: residues 5-25 and 30-50; these read AVVF…GIAA and IAKI…LGGV.

This sequence belongs to the UPF0391 family.

The protein localises to the cell membrane. The chain is UPF0391 membrane protein BP1737 from Bordetella pertussis (strain Tohama I / ATCC BAA-589 / NCTC 13251).